A 315-amino-acid polypeptide reads, in one-letter code: Intradiol ring-cleavage dioxygenase prcA (315 aa).

Residues tyrosine 166, tyrosine 200, histidine 224, and histidine 226 each coordinate Fe cation. The disordered stretch occupies residues 287–315 (KKHHPNPNSAPPVSSFERFNKASKTQEKL). Residues 304–315 (RFNKASKTQEKL) show a composition bias toward basic and acidic residues.

Belongs to the intradiol ring-cleavage dioxygenase family. In terms of assembly, homodimer. Requires Fe(3+) as cofactor.

It catalyses the reaction 3,4-dihydroxybenzoate + O2 = 3-carboxy-cis,cis-muconate + 2 H(+). In terms of biological role, intradiol ring-cleavage dioxygenase; part of the benzoic acid degradation pathway also known as the protocatechuic acid pathway. Benzoic acid debradation begins with the conversion of benzoic acid into 4-hydroxybenzoic acid through hydroxylation by the benzoate-4-monooxygenase bphA, and its partner NADPH-cytochrome P450 reductase cprA which act as a mediator in electron donation from NADPH. 4-Hydroxybenzoic acid is then converted into 3,4-dihydroxybenzoic acid (also called protocatechuic acid) by the p-hydroxybenzoate-m-hydroxylase phhA. Protocatechuic acid is converted into 3-carboxy-cis,cis-muconic acid by the intradiol ring-cleavage dioxygenase prcA, which is further metabolized through the 3-oxoadipate pathway to finally enter the tricarboxylic acid cycle (TCA). In Aspergillus niger (strain ATCC MYA-4892 / CBS 513.88 / FGSC A1513), this protein is Intradiol ring-cleavage dioxygenase prcA.